We begin with the raw amino-acid sequence, 502 residues long: UPF0371 protein CLM_0396 (502 aa).

The protein belongs to the UPF0371 family.

This is UPF0371 protein CLM_0396 from Clostridium botulinum (strain Kyoto / Type A2).